Reading from the N-terminus, the 462-residue chain is tRNA pseudouridine(32) synthase, mitochondrial (462 aa).

A mitochondrion-targeting transit peptide spans 1-24 (MQRNNRLRNLFTVPVIMARQLKRN). Residues 127–188 (KLVDVFISEF…HEPPVTSRPI (62 aa)) enclose the S4 RNA-binding domain. Aspartate 238 is a catalytic residue.

It belongs to the pseudouridine synthase RluA family.

It localises to the mitochondrion. The enzyme catalyses uridine(32) in tRNA = pseudouridine(32) in tRNA. Responsible for synthesis of pseudouridine from uracil-32 in mitochondrial transfer RNAs. The sequence is that of tRNA pseudouridine(32) synthase, mitochondrial (PUS9) from Saccharomyces cerevisiae (strain ATCC 204508 / S288c) (Baker's yeast).